A 569-amino-acid polypeptide reads, in one-letter code: Urease subunit alpha (569 aa).

One can recognise a Urease domain in the interval 131–569; it reads GGIDSHIHFI…LPLAQRYFLF (439 aa). Ni(2+) is bound by residues histidine 136, histidine 138, and lysine 219. Lysine 219 carries the N6-carboxylysine modification. Substrate is bound at residue histidine 221. Residues histidine 248 and histidine 274 each coordinate Ni(2+). The active-site Proton donor is the histidine 322. Aspartate 362 provides a ligand contact to Ni(2+).

The protein belongs to the metallo-dependent hydrolases superfamily. Urease alpha subunit family. As to quaternary structure, heterotrimer of UreA (gamma), UreB (beta) and UreC (alpha) subunits. Three heterotrimers associate to form the active enzyme. Requires Ni cation as cofactor. Post-translationally, carboxylation allows a single lysine to coordinate two nickel ions.

It is found in the cytoplasm. The enzyme catalyses urea + 2 H2O + H(+) = hydrogencarbonate + 2 NH4(+). Its pathway is nitrogen metabolism; urea degradation; CO(2) and NH(3) from urea (urease route): step 1/1. In Herpetosiphon aurantiacus (strain ATCC 23779 / DSM 785 / 114-95), this protein is Urease subunit alpha.